A 188-amino-acid chain; its full sequence is Ribosome-recycling factor (188 aa).

The protein belongs to the RRF family.

The protein resides in the cytoplasm. In terms of biological role, responsible for the release of ribosomes from messenger RNA at the termination of protein biosynthesis. May increase the efficiency of translation by recycling ribosomes from one round of translation to another. The chain is Ribosome-recycling factor from Dinoroseobacter shibae (strain DSM 16493 / NCIMB 14021 / DFL 12).